The chain runs to 456 residues: tRNA modification GTPase MnmE (456 aa).

The (6S)-5-formyl-5,6,7,8-tetrahydrofolate site is built by Arg-21, Glu-85, and Lys-124. The 160-residue stretch at 220-379 (QLRIVLYGEP…LLDEIQKKAA (160 aa)) folds into the TrmE-type G domain. Residue Asn-230 participates in K(+) binding. Residues 230 to 235 (NTGKSS), 249 to 255 (SEIPGTT), and 274 to 277 (DTAG) each bind GTP. Mg(2+) is bound at residue Ser-234. Residues Ser-249, Ile-251, and Thr-254 each coordinate K(+). Mg(2+) is bound at residue Thr-255. Lys-456 contributes to the (6S)-5-formyl-5,6,7,8-tetrahydrofolate binding site.

It belongs to the TRAFAC class TrmE-Era-EngA-EngB-Septin-like GTPase superfamily. TrmE GTPase family. Homodimer. Heterotetramer of two MnmE and two MnmG subunits. Requires K(+) as cofactor.

It localises to the cytoplasm. In terms of biological role, exhibits a very high intrinsic GTPase hydrolysis rate. Involved in the addition of a carboxymethylaminomethyl (cmnm) group at the wobble position (U34) of certain tRNAs, forming tRNA-cmnm(5)s(2)U34. In Leptospira borgpetersenii serovar Hardjo-bovis (strain JB197), this protein is tRNA modification GTPase MnmE.